A 156-amino-acid chain; its full sequence is ATP synthase subunit b (156 aa).

Residues 7–29 form a helical membrane-spanning segment; that stretch reads LFAQMVVFLVLAWFTMKFVWPPL.

This sequence belongs to the ATPase B chain family. In terms of assembly, F-type ATPases have 2 components, F(1) - the catalytic core - and F(0) - the membrane proton channel. F(1) has five subunits: alpha(3), beta(3), gamma(1), delta(1), epsilon(1). F(0) has three main subunits: a(1), b(2) and c(10-14). The alpha and beta chains form an alternating ring which encloses part of the gamma chain. F(1) is attached to F(0) by a central stalk formed by the gamma and epsilon chains, while a peripheral stalk is formed by the delta and b chains.

Its subcellular location is the cell inner membrane. F(1)F(0) ATP synthase produces ATP from ADP in the presence of a proton or sodium gradient. F-type ATPases consist of two structural domains, F(1) containing the extramembraneous catalytic core and F(0) containing the membrane proton channel, linked together by a central stalk and a peripheral stalk. During catalysis, ATP synthesis in the catalytic domain of F(1) is coupled via a rotary mechanism of the central stalk subunits to proton translocation. In terms of biological role, component of the F(0) channel, it forms part of the peripheral stalk, linking F(1) to F(0). The chain is ATP synthase subunit b from Burkholderia lata (strain ATCC 17760 / DSM 23089 / LMG 22485 / NCIMB 9086 / R18194 / 383).